The chain runs to 198 residues: Transcriptional regulator GfcR (198 aa).

This sequence belongs to the purine/pyrimidine phosphoribosyltransferase family. GfcR subfamily.

The polypeptide is Transcriptional regulator GfcR (Methanospirillum hungatei JF-1 (strain ATCC 27890 / DSM 864 / NBRC 100397 / JF-1)).